A 173-amino-acid chain; its full sequence is Chorion protein S19 (173 aa).

The signal sequence occupies residues 1 to 21 (MNKFATLAVIFCACIVGSCYA).

It belongs to the chorion protein S19 family.

The protein resides in the secreted. Its function is as follows. Chorion membrane (egg shell) protein; plays a role in protecting the egg from the environment. The polypeptide is Chorion protein S19 (Cp19) (Drosophila melanogaster (Fruit fly)).